Here is a 408-residue protein sequence, read N- to C-terminus: Acetate kinase (408 aa).

N7 is a Mg(2+) binding site. An ATP-binding site is contributed by K14. Substrate is bound at residue R98. D155 serves as the catalytic Proton donor/acceptor. Residues 214 to 218 (HLGNG), 289 to 291 (DLR), and 337 to 341 (GVGEN) each bind ATP. E390 lines the Mg(2+) pocket.

It belongs to the acetokinase family. As to quaternary structure, homodimer. Mg(2+) serves as cofactor. Requires Mn(2+) as cofactor.

The protein localises to the cytoplasm. It catalyses the reaction acetate + ATP = acetyl phosphate + ADP. It participates in metabolic intermediate biosynthesis; acetyl-CoA biosynthesis; acetyl-CoA from acetate: step 1/2. In terms of biological role, catalyzes the formation of acetyl phosphate from acetate and ATP. Can also catalyze the reverse reaction. This Cyanothece sp. (strain PCC 7425 / ATCC 29141) protein is Acetate kinase.